Consider the following 602-residue polypeptide: Elongation factor 4 (602 aa).

One can recognise a tr-type G domain in the interval 7–189; that stretch reads KYIRNFSIVA…AIVNKVPAPD (183 aa). GTP-binding positions include 19–24 and 136–139; these read DHGKST and NKID.

This sequence belongs to the TRAFAC class translation factor GTPase superfamily. Classic translation factor GTPase family. LepA subfamily.

Its subcellular location is the cell membrane. It carries out the reaction GTP + H2O = GDP + phosphate + H(+). Its function is as follows. Required for accurate and efficient protein synthesis under certain stress conditions. May act as a fidelity factor of the translation reaction, by catalyzing a one-codon backward translocation of tRNAs on improperly translocated ribosomes. Back-translocation proceeds from a post-translocation (POST) complex to a pre-translocation (PRE) complex, thus giving elongation factor G a second chance to translocate the tRNAs correctly. Binds to ribosomes in a GTP-dependent manner. In Clostridium botulinum (strain ATCC 19397 / Type A), this protein is Elongation factor 4.